The chain runs to 126 residues: MAEITKADVITFIEKMSVLDLAEMVKELEEKFGVSAAAPVAVAAVAGPAVAEAAEEQTEFDVILKAAGANKIAVIKVVRALTSLGLKEAKDLVDGAPQPVKSGVSKEEAEEAKKQLAESGAEVEVK.

Positions 97–126 are disordered; that stretch reads PQPVKSGVSKEEAEEAKKQLAESGAEVEVK. Basic and acidic residues predominate over residues 104–116; sequence VSKEEAEEAKKQL.

This sequence belongs to the bacterial ribosomal protein bL12 family. In terms of assembly, homodimer. Part of the ribosomal stalk of the 50S ribosomal subunit. Forms a multimeric L10(L12)X complex, where L10 forms an elongated spine to which 2 to 4 L12 dimers bind in a sequential fashion. Binds GTP-bound translation factors.

In terms of biological role, forms part of the ribosomal stalk which helps the ribosome interact with GTP-bound translation factors. Is thus essential for accurate translation. This chain is Large ribosomal subunit protein bL12, found in Geotalea uraniireducens (strain Rf4) (Geobacter uraniireducens).